A 691-amino-acid polypeptide reads, in one-letter code: Elongation factor G (691 aa).

The tr-type G domain occupies glutamate 8–valine 282. GTP-binding positions include alanine 17–threonine 24, aspartate 81–histidine 85, and asparagine 135–aspartate 138.

Belongs to the TRAFAC class translation factor GTPase superfamily. Classic translation factor GTPase family. EF-G/EF-2 subfamily.

It is found in the cytoplasm. Functionally, catalyzes the GTP-dependent ribosomal translocation step during translation elongation. During this step, the ribosome changes from the pre-translocational (PRE) to the post-translocational (POST) state as the newly formed A-site-bound peptidyl-tRNA and P-site-bound deacylated tRNA move to the P and E sites, respectively. Catalyzes the coordinated movement of the two tRNA molecules, the mRNA and conformational changes in the ribosome. The protein is Elongation factor G of Prochlorococcus marinus (strain NATL1A).